The sequence spans 202 residues: CASP-like protein 1U4 (202 aa).

At 1 to 10 (MCLPAKWLHP) the chain is on the cytoplasmic side. A helical membrane pass occupies residues 11–31 (VSLIFRVAGIGLAAVSAAAML). Residues 32 to 56 (TASQCTVYADYGWRPRTVTYSDFPA) are Extracellular-facing. Residues 57-77 (FVYLVAATAIATLLEAVALFL) traverse the membrane as a helical segment. At 78-94 (SWSKKGKSKKSWRVLTM) the chain is on the cytoplasmic side. Residues 95–115 (LLLGAVVPALLYTSAGAAFAV) form a helical membrane-spanning segment. Residues 116 to 146 (GWEDIYYYLEPIGRRFSVCRSSVAGGRFCEH) lie on the Extracellular side of the membrane. A helical transmembrane segment spans residues 147–167 (VHVSMWLALGAAVAVSFAEFL). Over 168 to 202 (TTFRWCHGSGSCSDSDSDSDSDSESGCGHGCHCKH) the chain is Cytoplasmic.

The protein belongs to the Casparian strip membrane proteins (CASP) family. Homodimer and heterodimers.

It localises to the cell membrane. The polypeptide is CASP-like protein 1U4 (Sorghum bicolor (Sorghum)).